The primary structure comprises 2028 residues: Transient receptor potential cation channel subfamily M member 6 (2028 aa).

Residues 1–747 are Cytoplasmic-facing; the sequence is MQVKKSWIEG…MWMGRLKMRK (747 aa). Residues 577–601 are disordered; sequence QPYKSKEKPEDSQKSKKKSKERQSL. Residues 580–590 are compositionally biased toward basic and acidic residues; the sequence is KSKEKPEDSQK. A helical transmembrane segment spans residues 748–768; the sequence is NSWLKIIISILLPPMILTLEF. Residues 769–847 are Extracellular-facing; sequence KSKAEMSHVP…YEFYSAPFVK (79 aa). A helical membrane pass occupies residues 848-868; sequence FWFYTMAYLAFLMLFTYTVLV. The Cytoplasmic portion of the chain corresponds to 869 to 910; sequence EMQPQPSVHEWLVIIYIFTNAIEKVREICISEPSKFKQKVKM. Residues 911–931 traverse the membrane as a helical segment; it reads WLSEYWNLMETVAIGLFAVGF. Residues 932 to 945 lie on the Extracellular side of the membrane; sequence GLRWGHPPLQTAGR. Residues 946-966 traverse the membrane as a helical segment; that stretch reads LIYCIDIIFWFSRLMDFFAVN. At 967–978 the chain is on the cytoplasmic side; sequence QHAGPYVTMIAK. A helical transmembrane segment spans residues 979–999; the sequence is MAANMFYIVIIMAIVLLSFGV. The Extracellular portion of the chain corresponds to 1000-1018; the sequence is ARKAILSPKEPPSWRLARD. An intramembrane region (pore-forming) is located at residues 1019–1039; the sequence is IVFEPYWMMYGEVYASDIDVC. Topologically, residues 1040–1053 are extracellular; sequence SNETSCPPGSFLTP. Residues 1054 to 1074 traverse the membrane as a helical segment; sequence FLQAVYLFVQYIIMVNLLIAC. Topologically, residues 1075–2028 are cytoplasmic; sequence FNNIYLDIKS…RSSLEDHTRL (954 aa). Basic and acidic residues-rich tracts occupy residues 1313-1323 and 1665-1677; these read KREASHVREEQ and DHLR…RDKT. Disordered stretches follow at residues 1313–1339 and 1658–1694; these read KREA…GISH and RHTT…FLTR. Positions 1682 to 1694 are enriched in low complexity; that stretch reads SGSTSLSRSFLTR. At Thr1730 the chain carries Phosphothreonine; by autocatalysis. The 231-residue stretch at 1756-1986 folds into the Alpha-type protein kinase domain; sequence TLDKSMSSWS…CCGKLRLPDL (231 aa). 5 residues coordinate ADP: Gly1783, Gly1784, Leu1785, Arg1786, and Lys1810. At Thr1857 the chain carries Phosphothreonine; by autocatalysis. 2 residues coordinate ADP: Glu1882 and Met1885. Position 1915 (His1915) interacts with Zn(2+). Asp1929 acts as the Proton acceptor in catalysis. Asp1939 contacts ADP. Zn(2+) contacts are provided by His1972, Cys1974, and Cys1978. The interval 2009-2028 is disordered; the sequence is TEELPERDKNRSSLEDHTRL. Basic and acidic residues predominate over residues 2012–2028; sequence LPERDKNRSSLEDHTRL.

The protein in the C-terminal section; belongs to the protein kinase superfamily. Alpha-type protein kinase family. ALPK subfamily. It in the N-terminal section; belongs to the transient receptor (TC 1.A.4) family. LTrpC subfamily. TRPM6 sub-subfamily. Forms heteromers with TRPM7; TRPM6 increases the current amplitude of TRPM6/7 heteromers as compared to TRPM7 homomers. Interacts (via kinase domain) with RACK1. Autophosphorylated; autophosphorylation controls the protein kinase activity of TRPM6 towards their substrates. Autophosphorylation of Thr-1857 in the kinase domain is essential for the inhibitory effect of RACK1. In terms of processing, the C-terminus of TRPM6 is proteolytically cleaved in vivo, in a cell type-specific fashion, releasing the kinase module from the transmembrane domain. The cleaved kinase fragments are translocated to the nucleus to phosphorylate histones and regulate gene expression.

It localises to the cell membrane. It is found in the apical cell membrane. The protein resides in the nucleus. It catalyses the reaction L-seryl-[protein] + ATP = O-phospho-L-seryl-[protein] + ADP + H(+). It carries out the reaction L-threonyl-[protein] + ATP = O-phospho-L-threonyl-[protein] + ADP + H(+). The enzyme catalyses Mg(2+)(in) = Mg(2+)(out). The catalysed reaction is Ca(2+)(in) = Ca(2+)(out). It catalyses the reaction Zn(2+)(in) = Zn(2+)(out). Its activity is regulated as follows. Strongly inhibited by intracellular Mg(2+); unlikely to be active at physiological levels of intracellular Mg(2+). In the heteromeric TRPM6-TRPM7 channels complexes, TRPM7 are able to offset the very high sensitivity of TRPM6 to cytosolic Mg(2+) to physiologically relevant concentrations, whereas TRPM6 relieve TRPM7 from the inhibitory action of Mg-ATP. Consequently, the association of TRPM6 with TRPM7 allow for high constitutive activity of TRPM6/7 in the presence of physiological levels of Mg(2+) and Mg-ATP. The kinase activity is controlled through the autophosphorylation of a serine/threonine-rich region located to the N-terminal of the catalytic domain. Functionally, bifunctional protein that combines an ion channel with an intrinsic kinase domain, enabling it to modulate cellular functions either by conducting ions through the pore or by phosphorylating downstream proteins via its kinase domain. Crucial for Mg(2+) homeostasis. Has an important role in epithelial magnesium transport and in the active Mg(2+) absorption in the gut and kidney. However, whether TRPM6 forms functional homomeric channels by itself or functions primarily as a subunit of heteromeric TRPM6-TRPM7 channels, is still under debate. In terms of biological role, the C-terminal kinase domain can be cleaved from the channel segment in a cell-type-specific fashion. The cleaved kinase fragments can translocate to the nucleus, and bind chromatin-remodeling complex proteins to ultimately phosphorylate specific Ser/Thr residues of histones known to be functionally important for cell differentiation and development. This is Transient receptor potential cation channel subfamily M member 6 (Trpm6) from Mus musculus (Mouse).